A 290-amino-acid polypeptide reads, in one-letter code: uncharacterized protein (290 aa).

Residues 153 to 178 form a disordered region; that stretch reads EMVPITTSSTTPRSKGDEATSTGAFP. The span at 157–178 shows a compositional bias: polar residues; sequence ITTSSTTPRSKGDEATSTGAFP. Residues 202–222 form a helical membrane-spanning segment; it reads LIAVTLLLGGAAIIVFVIFEV. The interval 246-276 is disordered; that stretch reads KEEDQKPGTTESQLDSQPEKVKHNVPNSSDS. The span at 252–261 shows a compositional bias: polar residues; the sequence is PGTTESQLDS.

It is found in the membrane. This is an uncharacterized protein from Mus musculus (Mouse).